Consider the following 56-residue polypeptide: Small ribosomal subunit protein uS14 (56 aa).

Zn(2+) is bound by residues cysteine 21, cysteine 24, cysteine 39, and cysteine 42.

The protein belongs to the universal ribosomal protein uS14 family. In terms of assembly, component of the small ribosomal subunit (SSU). Mature N.crassa ribosomes consist of a small (40S) and a large (60S) subunit. The 40S small subunit contains 1 molecule of ribosomal RNA (18S rRNA) and at least 32 different proteins. The large 60S subunit contains 3 rRNA molecules (26S, 5.8S and 5S rRNA) and at least 42 different proteins. The cofactor is Zn(2+).

Its subcellular location is the cytoplasm. In terms of biological role, component of the ribosome, a large ribonucleoprotein complex responsible for the synthesis of proteins in the cell. The small ribosomal subunit (SSU) binds messenger RNAs (mRNAs) and translates the encoded message by selecting cognate aminoacyl-transfer RNA (tRNA) molecules. The large subunit (LSU) contains the ribosomal catalytic site termed the peptidyl transferase center (PTC), which catalyzes the formation of peptide bonds, thereby polymerizing the amino acids delivered by tRNAs into a polypeptide chain. The nascent polypeptides leave the ribosome through a tunnel in the LSU and interact with protein factors that function in enzymatic processing, targeting, and the membrane insertion of nascent chains at the exit of the ribosomal tunnel. The polypeptide is Small ribosomal subunit protein uS14 (rps-29) (Neurospora crassa (strain ATCC 24698 / 74-OR23-1A / CBS 708.71 / DSM 1257 / FGSC 987)).